The primary structure comprises 95 residues: Glutamyl-tRNA(Gln) amidotransferase subunit C 1 (95 aa).

It belongs to the GatC family. Heterotrimer of A, B and C subunits.

It carries out the reaction L-glutamyl-tRNA(Gln) + L-glutamine + ATP + H2O = L-glutaminyl-tRNA(Gln) + L-glutamate + ADP + phosphate + H(+). It catalyses the reaction L-aspartyl-tRNA(Asn) + L-glutamine + ATP + H2O = L-asparaginyl-tRNA(Asn) + L-glutamate + ADP + phosphate + 2 H(+). Its function is as follows. Allows the formation of correctly charged Asn-tRNA(Asn) or Gln-tRNA(Gln) through the transamidation of misacylated Asp-tRNA(Asn) or Glu-tRNA(Gln) in organisms which lack either or both of asparaginyl-tRNA or glutaminyl-tRNA synthetases. The reaction takes place in the presence of glutamine and ATP through an activated phospho-Asp-tRNA(Asn) or phospho-Glu-tRNA(Gln). This is Glutamyl-tRNA(Gln) amidotransferase subunit C 1 (gatC1) from Clostridium acetobutylicum (strain ATCC 824 / DSM 792 / JCM 1419 / IAM 19013 / LMG 5710 / NBRC 13948 / NRRL B-527 / VKM B-1787 / 2291 / W).